The chain runs to 43 residues: Potassium channel toxin gamma-KTx 4.6 (43 aa).

4 cysteine pairs are disulfide-bonded: Cys-5–Cys-23, Cys-11–Cys-34, Cys-20–Cys-39, and Cys-24–Cys-41.

It belongs to the ergtoxin family. Gamma-KTx 4 subfamily. In terms of tissue distribution, expressed by the venom gland.

It is found in the secreted. In terms of biological role, reversibly blocks Kv11/ERG potassium channels. In Centruroides limpidus (Mexican scorpion), this protein is Potassium channel toxin gamma-KTx 4.6.